A 367-amino-acid chain; its full sequence is Anhydro-N-acetylmuramic acid kinase (367 aa).

11 to 18 provides a ligand contact to ATP; the sequence is GTSLDGVD.

The protein belongs to the anhydro-N-acetylmuramic acid kinase family.

It carries out the reaction 1,6-anhydro-N-acetyl-beta-muramate + ATP + H2O = N-acetyl-D-muramate 6-phosphate + ADP + H(+). The protein operates within amino-sugar metabolism; 1,6-anhydro-N-acetylmuramate degradation. It functions in the pathway cell wall biogenesis; peptidoglycan recycling. Its function is as follows. Catalyzes the specific phosphorylation of 1,6-anhydro-N-acetylmuramic acid (anhMurNAc) with the simultaneous cleavage of the 1,6-anhydro ring, generating MurNAc-6-P. Is required for the utilization of anhMurNAc either imported from the medium or derived from its own cell wall murein, and thus plays a role in cell wall recycling. The sequence is that of Anhydro-N-acetylmuramic acid kinase from Rhodopseudomonas palustris (strain ATCC BAA-98 / CGA009).